Here is a 99-residue protein sequence, read N- to C-terminus: Aspartyl/glutamyl-tRNA(Asn/Gln) amidotransferase subunit C (99 aa).

It belongs to the GatC family. As to quaternary structure, heterotrimer of A, B and C subunits.

It catalyses the reaction L-glutamyl-tRNA(Gln) + L-glutamine + ATP + H2O = L-glutaminyl-tRNA(Gln) + L-glutamate + ADP + phosphate + H(+). It carries out the reaction L-aspartyl-tRNA(Asn) + L-glutamine + ATP + H2O = L-asparaginyl-tRNA(Asn) + L-glutamate + ADP + phosphate + 2 H(+). Functionally, allows the formation of correctly charged Asn-tRNA(Asn) or Gln-tRNA(Gln) through the transamidation of misacylated Asp-tRNA(Asn) or Glu-tRNA(Gln) in organisms which lack either or both of asparaginyl-tRNA or glutaminyl-tRNA synthetases. The reaction takes place in the presence of glutamine and ATP through an activated phospho-Asp-tRNA(Asn) or phospho-Glu-tRNA(Gln). The polypeptide is Aspartyl/glutamyl-tRNA(Asn/Gln) amidotransferase subunit C (Kineococcus radiotolerans (strain ATCC BAA-149 / DSM 14245 / SRS30216)).